Here is a 537-residue protein sequence, read N- to C-terminus: CTP synthase (537 aa).

Residues 1–267 (MAKYIFVTGG…DEYVIKRLNL (267 aa)) form an amidoligase domain region. Serine 13 contacts CTP. Serine 13 is a UTP binding site. An ATP-binding site is contributed by 14–19 (SLGKGI). Tyrosine 54 provides a ligand contact to L-glutamine. ATP is bound at residue aspartate 71. Residues aspartate 71 and glutamate 141 each contribute to the Mg(2+) site. CTP-binding positions include 148 to 150 (DIE), 188 to 193 (KTKPTQ), and lysine 224. UTP contacts are provided by residues 188–193 (KTKPTQ) and lysine 224. ATP is bound at residue 240-242 (RDV). Residues 292–534 (EVALVGKYVD…VKAMLNLKIN (243 aa)) form the Glutamine amidotransferase type-1 domain. An L-glutamine-binding site is contributed by glycine 354. Cysteine 381 (nucleophile; for glutamine hydrolysis) is an active-site residue. L-glutamine-binding positions include 382 to 385 (LGMQ), glutamate 405, and arginine 462. Active-site residues include histidine 507 and glutamate 509.

It belongs to the CTP synthase family. In terms of assembly, homotetramer.

It carries out the reaction UTP + L-glutamine + ATP + H2O = CTP + L-glutamate + ADP + phosphate + 2 H(+). It catalyses the reaction L-glutamine + H2O = L-glutamate + NH4(+). The enzyme catalyses UTP + NH4(+) + ATP = CTP + ADP + phosphate + 2 H(+). The protein operates within pyrimidine metabolism; CTP biosynthesis via de novo pathway; CTP from UDP: step 2/2. With respect to regulation, allosterically activated by GTP, when glutamine is the substrate; GTP has no effect on the reaction when ammonia is the substrate. The allosteric effector GTP functions by stabilizing the protein conformation that binds the tetrahedral intermediate(s) formed during glutamine hydrolysis. Inhibited by the product CTP, via allosteric rather than competitive inhibition. Its function is as follows. Catalyzes the ATP-dependent amination of UTP to CTP with either L-glutamine or ammonia as the source of nitrogen. Regulates intracellular CTP levels through interactions with the four ribonucleotide triphosphates. The protein is CTP synthase of Caldanaerobacter subterraneus subsp. tengcongensis (strain DSM 15242 / JCM 11007 / NBRC 100824 / MB4) (Thermoanaerobacter tengcongensis).